Here is a 159-residue protein sequence, read N- to C-terminus: NADH-quinone oxidoreductase subunit I (159 aa).

2 consecutive 4Fe-4S ferredoxin-type domains span residues 51–80 and 90–119; these read RRYENGEERCIACKLCEAICPAQAIVIEAD and TRYDIDMTKCIYCGLCQEACPVDAIVEGPN. Residues C60, C63, C66, C70, C99, C102, C105, and C109 each contribute to the [4Fe-4S] cluster site.

It belongs to the complex I 23 kDa subunit family. NDH-1 is composed of 14 different subunits. Subunits NuoA, H, J, K, L, M, N constitute the membrane sector of the complex. [4Fe-4S] cluster is required as a cofactor.

The protein localises to the cell inner membrane. The catalysed reaction is a quinone + NADH + 5 H(+)(in) = a quinol + NAD(+) + 4 H(+)(out). NDH-1 shuttles electrons from NADH, via FMN and iron-sulfur (Fe-S) centers, to quinones in the respiratory chain. The immediate electron acceptor for the enzyme in this species is believed to be ubiquinone. Couples the redox reaction to proton translocation (for every two electrons transferred, four hydrogen ions are translocated across the cytoplasmic membrane), and thus conserves the redox energy in a proton gradient. In Rickettsia peacockii (strain Rustic), this protein is NADH-quinone oxidoreductase subunit I.